A 651-amino-acid polypeptide reads, in one-letter code: Probable potassium transport system protein Kup (651 aa).

12 helical membrane-spanning segments follow: residues 41-61 (LVLG…IYAF), 82-102 (VVSL…VLFV), 130-150 (LILG…VITP), 163-183 (IVAP…LVTL), 194-214 (VAIV…ASGL), 235-255 (FLTV…LAMT), 276-296 (WLWI…AFIL), 309-329 (MIPS…TVIA), 366-386 (IYIP…VLGF), 395-415 (AYGI…YIVM), 426-446 (ALPI…ANII), and 450-470 (EGGW…WTWV).

The protein belongs to the HAK/KUP transporter (TC 2.A.72) family.

It localises to the cell inner membrane. It carries out the reaction K(+)(in) + H(+)(in) = K(+)(out) + H(+)(out). In terms of biological role, transport of potassium into the cell. Likely operates as a K(+):H(+) symporter. This chain is Probable potassium transport system protein Kup, found in Brucella melitensis biotype 1 (strain ATCC 23456 / CCUG 17765 / NCTC 10094 / 16M).